The primary structure comprises 192 residues: NF-kappa-B inhibitor-interacting Ras-like protein 1 (192 aa).

11 to 18 (GLLSVGKT) contributes to the GTP binding site. Residues 35-43 (DCETLEDVY) carry the Effector region motif. The interval 58-93 (HLYDTRGLQKGVELPKHYFSFADGFVLVYSVNNLES) is interactions with NFKBIA and NFKBIB. GTP contacts are provided by residues 61–65 (DTRGL) and 120–123 (NKLD). The segment at 168 to 192 (LSQPQSKSSFPLPGRKNKGNSNPEN) is disordered.

This sequence belongs to the small GTPase superfamily. Ras family. KappaB-Ras subfamily. As to quaternary structure, interacts with both NF-kappa-B inhibitor alpha (NFKBIA) and beta (NFKBIB) in vitro. However, it probably only interacts with NFKBIB in vivo. Forms a complex with NFKBIB and NF-kappa-B heterodimer (p50/NFKB1 and p65/RELA). Also interacts with c-Rel (REL).

The protein localises to the cytoplasm. In terms of biological role, atypical Ras-like protein that acts as a potent regulator of NF-kappa-B activity by preventing the degradation of NF-kappa-B inhibitor beta (NFKBIB) by most signals, explaining why NFKBIB is more resistant to degradation. May act by blocking phosphorylation of NFKBIB and mediating cytoplasmic retention of p65/RELA NF-kappa-B subunit. It is unclear whether it acts as a GTPase. Both GTP- and GDP-bound forms block phosphorylation of NFKBIB. This Mus musculus (Mouse) protein is NF-kappa-B inhibitor-interacting Ras-like protein 1 (Nkiras1).